A 345-amino-acid polypeptide reads, in one-letter code: D-fructose 1,6-bisphosphatase class 2/sedoheptulose 1,7-bisphosphatase (345 aa).

4 residues coordinate Mn(2+): aspartate 33, glutamate 57, aspartate 97, and glutamate 100. Substrate contacts are provided by residues 100-102 (EGT), tyrosine 131, 176-178 (RPR), and 198-200 (DGD). A Mn(2+)-binding site is contributed by glutamate 225.

Belongs to the FBPase class 2 family. As to quaternary structure, homotetramer. Mn(2+) serves as cofactor.

It catalyses the reaction beta-D-fructose 1,6-bisphosphate + H2O = beta-D-fructose 6-phosphate + phosphate. The enzyme catalyses D-sedoheptulose 1,7-bisphosphate + H2O = D-sedoheptulose 7-phosphate + phosphate. It participates in carbohydrate biosynthesis; Calvin cycle. Functionally, catalyzes the hydrolysis of fructose 1,6-bisphosphate (Fru 1,6-P2) and sedoheptulose 1,7-bisphosphate (Sed 1,7-P2) to fructose 6-phosphate and sedoheptulose 7-phosphate, respectively. This is D-fructose 1,6-bisphosphatase class 2/sedoheptulose 1,7-bisphosphatase from Microcystis aeruginosa (strain NIES-843 / IAM M-2473).